Reading from the N-terminus, the 180-residue chain is NAD(P)H-quinone oxidoreductase subunit I, chloroplastic (180 aa).

2 consecutive 4Fe-4S ferredoxin-type domains span residues 55 to 84 (GRIH…VHWR) and 95 to 124 (LNYS…MTEE). Positions 64, 67, 70, 74, 104, 107, 110, and 114 each coordinate [4Fe-4S] cluster.

The protein belongs to the complex I 23 kDa subunit family. NDH is composed of at least 16 different subunits, 5 of which are encoded in the nucleus. [4Fe-4S] cluster is required as a cofactor.

It is found in the plastid. The protein resides in the chloroplast thylakoid membrane. The enzyme catalyses a plastoquinone + NADH + (n+1) H(+)(in) = a plastoquinol + NAD(+) + n H(+)(out). It catalyses the reaction a plastoquinone + NADPH + (n+1) H(+)(in) = a plastoquinol + NADP(+) + n H(+)(out). In terms of biological role, NDH shuttles electrons from NAD(P)H:plastoquinone, via FMN and iron-sulfur (Fe-S) centers, to quinones in the photosynthetic chain and possibly in a chloroplast respiratory chain. The immediate electron acceptor for the enzyme in this species is believed to be plastoquinone. Couples the redox reaction to proton translocation, and thus conserves the redox energy in a proton gradient. This Calycanthus floridus var. glaucus (Eastern sweetshrub) protein is NAD(P)H-quinone oxidoreductase subunit I, chloroplastic.